A 620-amino-acid chain; its full sequence is Chaperone protein HscA homolog (620 aa).

Belongs to the heat shock protein 70 family.

Its function is as follows. Chaperone involved in the maturation of iron-sulfur cluster-containing proteins. Has a low intrinsic ATPase activity which is markedly stimulated by HscB. The polypeptide is Chaperone protein HscA homolog (Pseudomonas putida (strain ATCC 47054 / DSM 6125 / CFBP 8728 / NCIMB 11950 / KT2440)).